Consider the following 321-residue polypeptide: Lipoyl synthase (321 aa).

The [4Fe-4S] cluster site is built by cysteine 68, cysteine 73, cysteine 79, cysteine 94, cysteine 98, cysteine 101, and serine 308. In terms of domain architecture, Radical SAM core spans 80–297 (FNHGTATFMI…KEVALELGFT (218 aa)).

Belongs to the radical SAM superfamily. Lipoyl synthase family. [4Fe-4S] cluster serves as cofactor.

The protein resides in the cytoplasm. It carries out the reaction [[Fe-S] cluster scaffold protein carrying a second [4Fe-4S](2+) cluster] + N(6)-octanoyl-L-lysyl-[protein] + 2 oxidized [2Fe-2S]-[ferredoxin] + 2 S-adenosyl-L-methionine + 4 H(+) = [[Fe-S] cluster scaffold protein] + N(6)-[(R)-dihydrolipoyl]-L-lysyl-[protein] + 4 Fe(3+) + 2 hydrogen sulfide + 2 5'-deoxyadenosine + 2 L-methionine + 2 reduced [2Fe-2S]-[ferredoxin]. It functions in the pathway protein modification; protein lipoylation via endogenous pathway; protein N(6)-(lipoyl)lysine from octanoyl-[acyl-carrier-protein]: step 2/2. Catalyzes the radical-mediated insertion of two sulfur atoms into the C-6 and C-8 positions of the octanoyl moiety bound to the lipoyl domains of lipoate-dependent enzymes, thereby converting the octanoylated domains into lipoylated derivatives. The polypeptide is Lipoyl synthase (Vibrio parahaemolyticus serotype O3:K6 (strain RIMD 2210633)).